Consider the following 382-residue polypeptide: Zinc metalloproteinase nas-7 (382 aa).

The signal sequence occupies residues 1 to 18; that stretch reads MLLPWIITIVTVIPATLG. Positions 19-79 are excised as a propeptide; that stretch reads HRNRVQDDEM…DIRLPRRHKR (61 aa). One can recognise a Peptidase M12A domain in the interval 80–273; that stretch reads NGVSRAAKLW…SKINRMYNCP (194 aa). 5 disulfides stabilise this stretch: cysteine 122/cysteine 272, cysteine 144/cysteine 163, cysteine 348/cysteine 382, cysteine 355/cysteine 375, and cysteine 362/cysteine 379. Histidine 171 contributes to the Zn(2+) binding site. Glutamate 172 is a catalytic residue. Residues histidine 175 and histidine 181 each contribute to the Zn(2+) site. The ShKT domain occupies 348–382; that stretch reads CEDRITVCWWTADRCRSPAIYQVMSSLCPKTCKFC.

Requires Zn(2+) as cofactor. In terms of tissue distribution, expressed in the head of adult hermaphrodites but not within pharynx cells. Expressed in pharyngeal muscles, mc cells, intestine, hypodermal seam cells, arcade cells, spermatheca, vulva and rectal epithelial cells.

Its subcellular location is the secreted. Metalloprotease. The chain is Zinc metalloproteinase nas-7 (nas-7) from Caenorhabditis elegans.